The following is a 119-amino-acid chain: Large ribosomal subunit protein uL18 (119 aa).

This sequence belongs to the universal ribosomal protein uL18 family. In terms of assembly, part of the 50S ribosomal subunit; part of the 5S rRNA/L5/L18/L25 subcomplex. Contacts the 5S and 23S rRNAs.

Functionally, this is one of the proteins that bind and probably mediate the attachment of the 5S RNA into the large ribosomal subunit, where it forms part of the central protuberance. The chain is Large ribosomal subunit protein uL18 from Cupriavidus metallidurans (strain ATCC 43123 / DSM 2839 / NBRC 102507 / CH34) (Ralstonia metallidurans).